A 473-amino-acid polypeptide reads, in one-letter code: Glutamine synthetase (473 aa).

The GS beta-grasp domain maps to 18 to 102 (NNIKWVDLQF…VLTKVFWGGG (85 aa)). A GS catalytic domain is found at 110-473 (PRGIAEEAEK…PMEIYQYLDS (364 aa)). Mg(2+)-binding residues include E133 and E135. Residue E207 participates in ATP binding. 2 residues coordinate Mg(2+): E212 and E220. L-glutamate-binding positions include 264–265 (NG) and G265. H269 is a Mg(2+) binding site. ATP contacts are provided by residues 271-273 (HFS) and S273. Residues R324, E330, and R342 each contribute to the L-glutamate site. Positions 342, 347, and 357 each coordinate ATP. Mg(2+) is bound at residue E362. R364 contributes to the L-glutamate binding site.

It belongs to the glutamine synthetase family. Oligomer of 12 subunits arranged in the form of two hexagons. Requires Mg(2+) as cofactor. Mn(2+) serves as cofactor.

Its subcellular location is the cytoplasm. The enzyme catalyses L-glutamate + NH4(+) + ATP = L-glutamine + ADP + phosphate + H(+). Strongly inhibited by glycine and L-alanine. AMP at 10 mM displays a very weak inhibitory effect. The activity of this enzyme is not controlled by adenylation. Its function is as follows. Probably involved in nitrogen metabolism via ammonium assimilation. Catalyzes the ATP-dependent biosynthesis of glutamine from glutamate and ammonia. This chain is Glutamine synthetase, found in Sulfolobus acidocaldarius (strain ATCC 33909 / DSM 639 / JCM 8929 / NBRC 15157 / NCIMB 11770).